The primary structure comprises 815 residues: Protein SEY1 homolog (815 aa).

Residues 1-737 (MRQIIDYDCN…IQSTGRQPQN (737 aa)) lie on the Cytoplasmic side of the membrane. A GB1/RHD3-type G domain is found at 28 to 260 (TLGFNVISIL…LPKDYTRRIP (233 aa)). Residue 38-45 (GCQSTGKS) coordinates GTP. The stretch at 298 to 321 (AKDDILDGYKKSIKDLQKKMEKRE) forms a coiled coil. Residues 738–758 (IPWWIYLLIIILGFDEITYVL) form a helical membrane-spanning segment. The Lumenal segment spans residues 759 to 761 (TSP). The chain crosses the membrane as a helical span at residues 762–782 (VLVTLLLLLASFIYSYLTGNF). The Cytoplasmic segment spans residues 783-815 (SSFCNYSQQFVIISTKILHYISGAIHSSLDNRK).

This sequence belongs to the TRAFAC class dynamin-like GTPase superfamily. GB1/RHD3 GTPase family. RHD3 subfamily.

The protein resides in the endoplasmic reticulum membrane. Functionally, probable GTP-binding protein that may be involved in cell development. The protein is Protein SEY1 homolog of Cryptosporidium hominis.